A 130-amino-acid chain; its full sequence is 3-hydroxyisobutyrate dehydrogenase, mitochondrial (130 aa).

Residues 1 to 17, 25 to 26, and Asn-30 contribute to the NAD(+) site; these read TPVG…PMAK and LP. Residue Lys-43 is modified to N6-acetyllysine. At Lys-47 the chain carries N6-acetyllysine; alternate. Residue Lys-47 is modified to N6-succinyllysine; alternate. Position 101 is an N6-succinyllysine (Lys-101).

It belongs to the HIBADH-related family. 3-hydroxyisobutyrate dehydrogenase subfamily. As to quaternary structure, homodimer.

Its subcellular location is the mitochondrion. It catalyses the reaction 3-hydroxy-2-methylpropanoate + NAD(+) = 2-methyl-3-oxopropanoate + NADH + H(+). It functions in the pathway amino-acid degradation; L-valine degradation. This chain is 3-hydroxyisobutyrate dehydrogenase, mitochondrial, found in Mesocricetus auratus (Golden hamster).